A 202-amino-acid chain; its full sequence is NADH dehydrogenase [ubiquinone] iron-sulfur protein 7, mitochondrial (202 aa).

The N-terminal 56 residues, 1-56, are a transit peptide targeting the mitochondrion; the sequence is MLRRTSFNFTGRAMISRGSPEWSHRLDLKKGKKTTMMHKLGTSKPNNALQYAQMTL. [4Fe-4S] cluster is bound by residues Cys-77, Cys-78, Cys-142, and Cys-172.

It belongs to the complex I 20 kDa subunit family. Complex I is composed of 45 different subunits This is a component of the iron-sulfur (IP) fragment of the enzyme. [4Fe-4S] cluster is required as a cofactor.

Its subcellular location is the mitochondrion. It carries out the reaction a ubiquinone + NADH + 5 H(+)(in) = a ubiquinol + NAD(+) + 4 H(+)(out). Its function is as follows. Core subunit of the mitochondrial membrane respiratory chain NADH dehydrogenase (Complex I) that is believed to belong to the minimal assembly required for catalysis. Complex I functions in the transfer of electrons from NADH to the respiratory chain. The immediate electron acceptor for the enzyme is believed to be ubiquinone. The chain is NADH dehydrogenase [ubiquinone] iron-sulfur protein 7, mitochondrial (NDHK) from Trypanosoma brucei brucei.